Consider the following 295-residue polypeptide: Secreted frizzled-related protein 2 (295 aa).

A signal peptide spans 1–24 (MLQGPGSLLLLFLASHCCLGSARG). One can recognise an FZ domain in the interval 35–155 (YKRSNCKPIP…PQDNDLCIPL (121 aa)). 8 disulfides stabilise this stretch: cysteine 40–cysteine 103, cysteine 50–cysteine 96, cysteine 87–cysteine 125, cysteine 114–cysteine 152, cysteine 118–cysteine 142, cysteine 172–cysteine 245, cysteine 175–cysteine 247, and cysteine 190–cysteine 295. The NTR domain occupies 172 to 295 (CEACKNKNDD…ISRSIRKLQC (124 aa)).

Belongs to the secreted frizzled-related protein (sFRP) family. In terms of tissue distribution, expressed in adipose tissue, heart, brain, skeletal muscle, pancreas, thymus, prostate, testis, ovary, small intestine and colon. Highest levels in adipose tissue, small intestine and colon.

It is found in the secreted. Functionally, soluble frizzled-related proteins (sFRPS) function as modulators of Wnt signaling through direct interaction with Wnts. They have a role in regulating cell growth and differentiation in specific cell types. SFRP2 may be important for eye retinal development and for myogenesis. This Homo sapiens (Human) protein is Secreted frizzled-related protein 2 (SFRP2).